The chain runs to 159 residues: NADH-quinone oxidoreductase subunit B 2 (159 aa).

Residues Cys37, Cys38, Cys102, and Cys132 each coordinate [4Fe-4S] cluster.

It belongs to the complex I 20 kDa subunit family. As to quaternary structure, NDH-1 is composed of 14 different subunits. Subunits NuoB, C, D, E, F, and G constitute the peripheral sector of the complex. The cofactor is [4Fe-4S] cluster.

The protein resides in the cell inner membrane. It carries out the reaction a quinone + NADH + 5 H(+)(in) = a quinol + NAD(+) + 4 H(+)(out). Functionally, NDH-1 shuttles electrons from NADH, via FMN and iron-sulfur (Fe-S) centers, to quinones in the respiratory chain. Couples the redox reaction to proton translocation (for every two electrons transferred, four hydrogen ions are translocated across the cytoplasmic membrane), and thus conserves the redox energy in a proton gradient. The protein is NADH-quinone oxidoreductase subunit B 2 of Azoarcus sp. (strain BH72).